A 263-amino-acid chain; its full sequence is MSKRIAIYGKGGIGKSTIVSNIAAAYSKDYNVLVIGCDPKADTTRTLIGKRLPTILDIVKKKKNASIEEVLFEGYGNVKCVESGGPEPGVGCAGRGVIVAMGLLDKLGTFSDDIDIIIYDVLGDVVCGGFAVPLREDFADEVYIVTSGEYMALYAANNICRGIKKLKSNLGGIICNCRGIENEVQIVSEFAGKVGSKVIGIIPGSEMVQKSEIDAKTVIEKFGESEQADLYRELAKSIYSNEDFVIPEPMGVDEFDEFFRGFQ.

9-16 (GKGGIGKS) contacts ATP. Cys92 lines the [4Fe-4S] cluster pocket. The residue at position 95 (Arg95) is an ADP-ribosylarginine; by dinitrogenase reductase ADP-ribosyltransferase. Cys127 is a [4Fe-4S] cluster binding site.

This sequence belongs to the NifH/BchL/ChlL family. Homodimer. [4Fe-4S] cluster is required as a cofactor. The reversible ADP-ribosylation of Arg-95 inactivates the nitrogenase reductase and regulates nitrogenase activity.

The catalysed reaction is N2 + 8 reduced [2Fe-2S]-[ferredoxin] + 16 ATP + 16 H2O = H2 + 8 oxidized [2Fe-2S]-[ferredoxin] + 2 NH4(+) + 16 ADP + 16 phosphate + 6 H(+). Its function is as follows. The key enzymatic reactions in nitrogen fixation are catalyzed by the nitrogenase complex, which has 2 components: the iron protein and the molybdenum-iron protein. The chain is Nitrogenase iron protein 2 (nifH2) from Methanobacterium ivanovii.